Here is a 189-residue protein sequence, read N- to C-terminus: UPF0301 protein PST_3956 (189 aa).

This sequence belongs to the UPF0301 (AlgH) family.

The protein is UPF0301 protein PST_3956 of Stutzerimonas stutzeri (strain A1501) (Pseudomonas stutzeri).